A 247-amino-acid polypeptide reads, in one-letter code: Triosephosphate isomerase (247 aa).

Residues N10 and K12 each contribute to the substrate site. The Electrophile role is filled by H94. The active-site Proton acceptor is E164.

Belongs to the triosephosphate isomerase family. Homodimer.

It catalyses the reaction D-glyceraldehyde 3-phosphate = dihydroxyacetone phosphate. The protein operates within carbohydrate biosynthesis; gluconeogenesis. It participates in carbohydrate degradation; glycolysis; D-glyceraldehyde 3-phosphate from glycerone phosphate: step 1/1. In Drosophila simulans (Fruit fly), this protein is Triosephosphate isomerase (Tpi).